We begin with the raw amino-acid sequence, 488 residues long: Probable cytosol aminopeptidase (488 aa).

Mn(2+) contacts are provided by Lys254 and Asp259. Lys266 is a catalytic residue. Positions 277, 336, and 338 each coordinate Mn(2+). Arg340 is an active-site residue.

This sequence belongs to the peptidase M17 family. The cofactor is Mn(2+).

The protein localises to the cytoplasm. The enzyme catalyses Release of an N-terminal amino acid, Xaa-|-Yaa-, in which Xaa is preferably Leu, but may be other amino acids including Pro although not Arg or Lys, and Yaa may be Pro. Amino acid amides and methyl esters are also readily hydrolyzed, but rates on arylamides are exceedingly low.. The catalysed reaction is Release of an N-terminal amino acid, preferentially leucine, but not glutamic or aspartic acids.. Functionally, presumably involved in the processing and regular turnover of intracellular proteins. Catalyzes the removal of unsubstituted N-terminal amino acids from various peptides. The sequence is that of Probable cytosol aminopeptidase from Roseiflexus castenholzii (strain DSM 13941 / HLO8).